The sequence spans 180 residues: Oligoribonuclease (180 aa).

One can recognise an Exonuclease domain in the interval 7 to 170 (LIWIDLEMTG…DDIRESIAEL (164 aa)). Residue Tyr-128 is part of the active site.

The protein belongs to the oligoribonuclease family.

Its subcellular location is the cytoplasm. Its function is as follows. 3'-to-5' exoribonuclease specific for small oligoribonucleotides. This Pseudomonas putida (strain ATCC 700007 / DSM 6899 / JCM 31910 / BCRC 17059 / LMG 24140 / F1) protein is Oligoribonuclease.